A 92-amino-acid chain; its full sequence is Conotoxin Cal22f (92 aa).

Residues 1–24 form the signal peptide; the sequence is MMSTKGITLFLCLLLLALATSVNG. A propeptide spanning residues 25–44 is cleaved from the precursor; that stretch reads GQGTRRSRMTRALHGGRPSA.

In terms of processing, contains 4 disulfide bonds. In terms of tissue distribution, expressed by the venom duct.

The protein localises to the secreted. Probable neurotoxin with unknown target. Possibly targets ion channels. This chain is Conotoxin Cal22f, found in Californiconus californicus (California cone).